The following is a 682-amino-acid chain: DNA-directed RNA polymerase subunit beta' (682 aa).

Residues Cys69, Cys71, Cys87, and Cys90 each coordinate Zn(2+). Mg(2+) is bound by residues Asp489, Asp491, and Asp493.

This sequence belongs to the RNA polymerase beta' chain family. RpoC1 subfamily. In terms of assembly, in plastids the minimal PEP RNA polymerase catalytic core is composed of four subunits: alpha, beta, beta', and beta''. When a (nuclear-encoded) sigma factor is associated with the core the holoenzyme is formed, which can initiate transcription. Mg(2+) is required as a cofactor. Requires Zn(2+) as cofactor.

Its subcellular location is the plastid. It localises to the chloroplast. The enzyme catalyses RNA(n) + a ribonucleoside 5'-triphosphate = RNA(n+1) + diphosphate. Its function is as follows. DNA-dependent RNA polymerase catalyzes the transcription of DNA into RNA using the four ribonucleoside triphosphates as substrates. This Agrostis stolonifera (Creeping bentgrass) protein is DNA-directed RNA polymerase subunit beta'.